The sequence spans 276 residues: Glutamate racemase (276 aa).

Residues 10–11 (DS) and 42–43 (YG) each bind substrate. Residue Cys-73 is the Proton donor/acceptor of the active site. A substrate-binding site is contributed by 74–75 (NS). The Proton donor/acceptor role is filled by Cys-183. 184–185 (TH) is a binding site for substrate.

Belongs to the aspartate/glutamate racemases family.

It catalyses the reaction L-glutamate = D-glutamate. The protein operates within cell wall biogenesis; peptidoglycan biosynthesis. In terms of biological role, provides the (R)-glutamate required for cell wall biosynthesis. The chain is Glutamate racemase from Parafrankia sp. (strain EAN1pec).